A 694-amino-acid polypeptide reads, in one-letter code: Frizzled-2 (694 aa).

The N-terminal stretch at 1–22 (MRHNRLKVLILGLVLLLTSCRA) is a signal peptide. Topologically, residues 23–315 (DGPLHSADHG…GPFFSNDEKD (293 aa)) are extracellular. The region spanning 59-180 (DPNLRCEEIT…GDPDNLCMEQ (122 aa)) is the FZ domain. Cystine bridges form between C64–C125, C72–C118, C109–C147, C136–C177, and C140–C164. Residue N78 is glycosylated (N-linked (GlcNAc...) asparagine). The disordered stretch occupies residues 175–253 (NLCMEQPSYT…QGEKASGKEC (79 aa)). The span at 187–224 (GSGGSSGGSGGSGSGSGSGGKRKQGGSGSGGSGAGGSS) shows a compositional bias: gly residues. N-linked (GlcNAc...) asparagine glycosylation occurs at N288. Residues 316–336 (FAGLWIALWSGLCFCSTLMTL) traverse the membrane as a helical segment. At 337–352 (TTFIIDTERFKYPERP) the chain is on the cytoplasmic side. Residues 353–373 (IVFLSACYFMVAVGYLSRNFL) traverse the membrane as a helical segment. At 374–397 (QNEEIACDGLLLRESSTGPHSCTL) the chain is on the extracellular side. The chain crosses the membrane as a helical span at residues 398–418 (VFLLTYFFGMASSIWWVILSF). The Cytoplasmic segment spans residues 419–439 (TWFLAAGLKWGNEAITKHSQY). The helical transmembrane segment at 440–460 (FHLAAWLIPTVQSVAVLLLSA) threads the bilayer. The Extracellular segment spans residues 461–482 (VDGDPILGICYVGNLNPDHLKT). Residues 483-503 (FVLAPLFVYLVIGTTFLMAGF) form a helical membrane-spanning segment. Residues 504 to 534 (VSLFRIRSVIKQQGGVGAGVKADKLEKLMIR) lie on the Cytoplasmic side of the membrane. A helical transmembrane segment spans residues 535–555 (IGIFSVLYTVPATIVIGCYLY). Topologically, residues 556–584 (EAAYFEDWIKALACPCAQVKGPGKKPLYS) are extracellular. The chain crosses the membrane as a helical span at residues 585 to 605 (VLMLKYFMALAVGITSGVWIW). Residues 606–694 (SGKTLESWRR…VLKQPAASHV (89 aa)) lie on the Cytoplasmic side of the membrane. The Lys-Thr-X-X-X-Trp motif, mediates interaction with the PDZ domain of Dvl family members motif lies at 608-613 (KTLESW). The PDZ-binding motif lies at 692-694 (SHV).

This sequence belongs to the G-protein coupled receptor Fz/Smo family. In terms of assembly, interacts with ATP6AP2.

It is found in the cell membrane. Functionally, receptor for Wnt proteins. Most of frizzled receptors are coupled to the beta-catenin canonical signaling pathway, which leads to the activation of disheveled proteins, inhibition of GSK-3 kinase, nuclear accumulation of beta-catenin and activation of Wnt target genes. A second signaling pathway involving PKC and calcium fluxes has been seen for some family members, but it is not yet clear if it represents a distinct pathway or if it can be integrated in the canonical pathway, as PKC seems to be required for Wnt-mediated inactivation of GSK-3 kinase. Both pathways seem to involve interactions with G-proteins. Required to coordinate the cytoskeletons of epidermal cells to produce a parallel array of cuticular hairs and bristles. The sequence is that of Frizzled-2 (fz2) from Drosophila melanogaster (Fruit fly).